Here is a 234-residue protein sequence, read N- to C-terminus: Ribonuclease HII (234 aa).

The region spanning 16–207 is the RNase H type-2 domain; it reads ALVAGVDEAG…VRRMLTPKAI (192 aa). Residues D22, E23, and D115 each coordinate a divalent metal cation.

This sequence belongs to the RNase HII family. Mn(2+) serves as cofactor. It depends on Mg(2+) as a cofactor.

It is found in the cytoplasm. It carries out the reaction Endonucleolytic cleavage to 5'-phosphomonoester.. Its function is as follows. Endonuclease that specifically degrades the RNA of RNA-DNA hybrids. The polypeptide is Ribonuclease HII (Xylella fastidiosa (strain M23)).